Here is a 477-residue protein sequence, read N- to C-terminus: Bifunctional protein HldE (477 aa).

A ribokinase region spans residues 1 to 318 (MKVTLPEFER…ENAVRGRADT (318 aa)). Position 195-198 (195-198 (NLSE)) interacts with ATP. The active site involves D264. Residues 344-477 (MTNGVFDILH…IKKIQKDSDK (134 aa)) are cytidylyltransferase.

This sequence in the N-terminal section; belongs to the carbohydrate kinase PfkB family. The protein in the C-terminal section; belongs to the cytidylyltransferase family. In terms of assembly, homodimer.

It catalyses the reaction D-glycero-beta-D-manno-heptose 7-phosphate + ATP = D-glycero-beta-D-manno-heptose 1,7-bisphosphate + ADP + H(+). The catalysed reaction is D-glycero-beta-D-manno-heptose 1-phosphate + ATP + H(+) = ADP-D-glycero-beta-D-manno-heptose + diphosphate. The protein operates within nucleotide-sugar biosynthesis; ADP-L-glycero-beta-D-manno-heptose biosynthesis; ADP-L-glycero-beta-D-manno-heptose from D-glycero-beta-D-manno-heptose 7-phosphate: step 1/4. It functions in the pathway nucleotide-sugar biosynthesis; ADP-L-glycero-beta-D-manno-heptose biosynthesis; ADP-L-glycero-beta-D-manno-heptose from D-glycero-beta-D-manno-heptose 7-phosphate: step 3/4. In terms of biological role, catalyzes the phosphorylation of D-glycero-D-manno-heptose 7-phosphate at the C-1 position to selectively form D-glycero-beta-D-manno-heptose-1,7-bisphosphate. Functionally, catalyzes the ADP transfer from ATP to D-glycero-beta-D-manno-heptose 1-phosphate, yielding ADP-D-glycero-beta-D-manno-heptose. In Citrobacter koseri (strain ATCC BAA-895 / CDC 4225-83 / SGSC4696), this protein is Bifunctional protein HldE.